The sequence spans 248 residues: Ubiquinone biosynthesis O-methyltransferase (248 aa).

Residues R41, G72, D93, and M136 each coordinate S-adenosyl-L-methionine.

Belongs to the methyltransferase superfamily. UbiG/COQ3 family.

It carries out the reaction a 3-demethylubiquinol + S-adenosyl-L-methionine = a ubiquinol + S-adenosyl-L-homocysteine + H(+). The catalysed reaction is a 3-(all-trans-polyprenyl)benzene-1,2-diol + S-adenosyl-L-methionine = a 2-methoxy-6-(all-trans-polyprenyl)phenol + S-adenosyl-L-homocysteine + H(+). The protein operates within cofactor biosynthesis; ubiquinone biosynthesis. O-methyltransferase that catalyzes the 2 O-methylation steps in the ubiquinone biosynthetic pathway. This Sinorhizobium fredii (strain NBRC 101917 / NGR234) protein is Ubiquinone biosynthesis O-methyltransferase.